The chain runs to 490 residues: ATP synthase subunit beta, chloroplastic (490 aa).

An ATP-binding site is contributed by 170-177; the sequence is GGAGVGKT.

The protein belongs to the ATPase alpha/beta chains family. In terms of assembly, F-type ATPases have 2 components, CF(1) - the catalytic core - and CF(0) - the membrane proton channel. CF(1) has five subunits: alpha(3), beta(3), gamma(1), delta(1), epsilon(1). CF(0) has four main subunits: a(1), b(1), b'(1) and c(9-12).

Its subcellular location is the plastid. It localises to the chloroplast thylakoid membrane. The enzyme catalyses ATP + H2O + 4 H(+)(in) = ADP + phosphate + 5 H(+)(out). Its function is as follows. Produces ATP from ADP in the presence of a proton gradient across the membrane. The catalytic sites are hosted primarily by the beta subunits. The sequence is that of ATP synthase subunit beta, chloroplastic from Cressa truxillensis (Spreading alkaliweed).